A 377-amino-acid polypeptide reads, in one-letter code: MAKRDYYEVLGVGKNASDDEIKKAYRKLAMKFHPDRNPDSKDAEEKFKEAKEAYEMLSDPEKKAAYDQYGHAGVDPNMAGGFGGAQGYGGFAEAFGDIFGDIFGQGGGGRRGGGPQAYRGADLRYSMEISLEQAAHGHEAQIRVPHWDDCDHCHGNGAEPGSSVETCPTCHGAGQVRVSQGFFTMQQTCPKCHGSGKFIPKPCTKCHGQGKLKSQKTLEVKIPAGIDEGMRIRSSGNGEPGINGGPPGDLYVEVHIKPHAVFERDGDDLHCQMPISFATAALGGDLEVPTLSGKATFPVPEATQSGKTFRLRGKGIKGVRSGYPGDLYVHVNVETPVKLTEAQKEMLRQFDRSVHEGGSRHSPQETSWLDKVKSFFS.

One can recognise a J domain in the interval 5 to 70 (DYYEVLGVGK…EKKAAYDQYG (66 aa)). The segment at 137 to 215 (GHEAQIRVPH…CHGQGKLKSQ (79 aa)) adopts a CR-type zinc-finger fold. The Zn(2+) site is built by Cys-150, Cys-153, Cys-167, Cys-170, Cys-189, Cys-192, Cys-203, and Cys-206. CXXCXGXG motif repeat units follow at residues 150 to 157 (CDHCHGNG), 167 to 174 (CPTCHGAG), 189 to 196 (CPKCHGSG), and 203 to 210 (CTKCHGQG).

The protein belongs to the DnaJ family. As to quaternary structure, homodimer. The cofactor is Zn(2+).

It localises to the cytoplasm. Participates actively in the response to hyperosmotic and heat shock by preventing the aggregation of stress-denatured proteins and by disaggregating proteins, also in an autonomous, DnaK-independent fashion. Unfolded proteins bind initially to DnaJ; upon interaction with the DnaJ-bound protein, DnaK hydrolyzes its bound ATP, resulting in the formation of a stable complex. GrpE releases ADP from DnaK; ATP binding to DnaK triggers the release of the substrate protein, thus completing the reaction cycle. Several rounds of ATP-dependent interactions between DnaJ, DnaK and GrpE are required for fully efficient folding. Also involved, together with DnaK and GrpE, in the DNA replication of plasmids through activation of initiation proteins. The polypeptide is Chaperone protein DnaJ (Cupriavidus taiwanensis (strain DSM 17343 / BCRC 17206 / CCUG 44338 / CIP 107171 / LMG 19424 / R1) (Ralstonia taiwanensis (strain LMG 19424))).